The sequence spans 156 residues: 6,7-dimethyl-8-ribityllumazine synthase (156 aa).

Residues F23, 57 to 59, and 81 to 83 each bind 5-amino-6-(D-ribitylamino)uracil; these read AYE and AVI. 86–87 contributes to the (2S)-2-hydroxy-3-oxobutyl phosphate binding site; the sequence is ST. The Proton donor role is filled by H89. Position 114 (F114) interacts with 5-amino-6-(D-ribitylamino)uracil. R128 lines the (2S)-2-hydroxy-3-oxobutyl phosphate pocket.

The protein belongs to the DMRL synthase family.

It catalyses the reaction (2S)-2-hydroxy-3-oxobutyl phosphate + 5-amino-6-(D-ribitylamino)uracil = 6,7-dimethyl-8-(1-D-ribityl)lumazine + phosphate + 2 H2O + H(+). Its pathway is cofactor biosynthesis; riboflavin biosynthesis; riboflavin from 2-hydroxy-3-oxobutyl phosphate and 5-amino-6-(D-ribitylamino)uracil: step 1/2. Catalyzes the formation of 6,7-dimethyl-8-ribityllumazine by condensation of 5-amino-6-(D-ribitylamino)uracil with 3,4-dihydroxy-2-butanone 4-phosphate. This is the penultimate step in the biosynthesis of riboflavin. The sequence is that of 6,7-dimethyl-8-ribityllumazine synthase from Helicobacter hepaticus (strain ATCC 51449 / 3B1).